The sequence spans 350 residues: Small-conductance mechanosensitive channel MscMJ (350 aa).

A run of 5 helical transmembrane segments spans residues 10 to 30 (ISNILIFVVITLLGIFIGKIV), 59 to 79 (LPIIVLVVTLFFYFGLRFLIL), 91 to 111 (VKVVVILSATYFAVKFIDGIF), 130 to 150 (IIKPLKKVVKILTILLGILTA), and 154 to 174 (VGYDITALLAGLGVGGLALAL).

The protein belongs to the MscS (TC 1.A.23) family.

The protein localises to the cell membrane. Small-conductance mechanosensitive channel that opens in response to stretch forces in the membrane lipid bilayer. Exhibits a sixfold preference for cations over anions. Non-rectifying. In Methanocaldococcus jannaschii (strain ATCC 43067 / DSM 2661 / JAL-1 / JCM 10045 / NBRC 100440) (Methanococcus jannaschii), this protein is Small-conductance mechanosensitive channel MscMJ.